The chain runs to 96 residues: Co-chaperonin GroES 2 (96 aa).

The protein belongs to the GroES chaperonin family. In terms of assembly, heptamer of 7 subunits arranged in a ring. Interacts with the chaperonin GroEL.

It localises to the cytoplasm. In terms of biological role, together with the chaperonin GroEL, plays an essential role in assisting protein folding. The GroEL-GroES system forms a nano-cage that allows encapsulation of the non-native substrate proteins and provides a physical environment optimized to promote and accelerate protein folding. GroES binds to the apical surface of the GroEL ring, thereby capping the opening of the GroEL channel. The polypeptide is Co-chaperonin GroES 2 (Vibrio vulnificus (strain CMCP6)).